Consider the following 44-residue polypeptide: Thymosin beta-10 (44 aa).

This sequence belongs to the thymosin beta family.

The protein resides in the cytoplasm. The protein localises to the cytoskeleton. In terms of biological role, plays an important role in the organization of the cytoskeleton. Binds to and sequesters actin monomers (G actin) and therefore inhibits actin polymerization. The protein is Thymosin beta-10 of Torpedo marmorata (Marbled electric ray).